A 223-amino-acid chain; its full sequence is Putative 3-methyladenine DNA glycosylase (223 aa).

It belongs to the DNA glycosylase MPG family.

This is Putative 3-methyladenine DNA glycosylase from Pseudomonas syringae pv. tomato (strain ATCC BAA-871 / DC3000).